We begin with the raw amino-acid sequence, 449 residues long: Bifunctional protein GlmU (449 aa).

The tract at residues 1–230 (MASSKLAVIV…EAELLGVNAR (230 aa)) is pyrophosphorylase. Residues 11 to 14 (LAAG), K25, Q74, 79 to 80 (GT), 102 to 104 (YGD), G142, E156, N171, and N228 contribute to the UDP-N-acetyl-alpha-D-glucosamine site. Mg(2+) is bound at residue D104. Residue N228 coordinates Mg(2+). The segment at 231 to 251 (SELAVAEALVQARLREAAMDN) is linker. Positions 252-449 (GATLIDPATV…QQAAKKAKKD (198 aa)) are N-acetyltransferase. UDP-N-acetyl-alpha-D-glucosamine is bound by residues R317 and K335. Residue H347 is the Proton acceptor of the active site. Residues Y350 and N361 each contribute to the UDP-N-acetyl-alpha-D-glucosamine site. Residues A364, 370–371 (NY), S389, A407, and R424 each bind acetyl-CoA.

It in the N-terminal section; belongs to the N-acetylglucosamine-1-phosphate uridyltransferase family. This sequence in the C-terminal section; belongs to the transferase hexapeptide repeat family. As to quaternary structure, homotrimer. Requires Mg(2+) as cofactor.

The protein localises to the cytoplasm. It carries out the reaction alpha-D-glucosamine 1-phosphate + acetyl-CoA = N-acetyl-alpha-D-glucosamine 1-phosphate + CoA + H(+). The catalysed reaction is N-acetyl-alpha-D-glucosamine 1-phosphate + UTP + H(+) = UDP-N-acetyl-alpha-D-glucosamine + diphosphate. The protein operates within nucleotide-sugar biosynthesis; UDP-N-acetyl-alpha-D-glucosamine biosynthesis; N-acetyl-alpha-D-glucosamine 1-phosphate from alpha-D-glucosamine 6-phosphate (route II): step 2/2. It participates in nucleotide-sugar biosynthesis; UDP-N-acetyl-alpha-D-glucosamine biosynthesis; UDP-N-acetyl-alpha-D-glucosamine from N-acetyl-alpha-D-glucosamine 1-phosphate: step 1/1. It functions in the pathway bacterial outer membrane biogenesis; LPS lipid A biosynthesis. Functionally, catalyzes the last two sequential reactions in the de novo biosynthetic pathway for UDP-N-acetylglucosamine (UDP-GlcNAc). The C-terminal domain catalyzes the transfer of acetyl group from acetyl coenzyme A to glucosamine-1-phosphate (GlcN-1-P) to produce N-acetylglucosamine-1-phosphate (GlcNAc-1-P), which is converted into UDP-GlcNAc by the transfer of uridine 5-monophosphate (from uridine 5-triphosphate), a reaction catalyzed by the N-terminal domain. This is Bifunctional protein GlmU from Paramagnetospirillum magneticum (strain ATCC 700264 / AMB-1) (Magnetospirillum magneticum).